The following is an 874-amino-acid chain: Coatomer subunit gamma-1 (874 aa).

Residues 1–11 (MLKKFDKKDEE) show a composition bias toward basic and acidic residues. The tract at residues 1-21 (MLKKFDKKDEESGGGSNPLQH) is disordered. HEAT repeat units follow at residues 64-101 (TEAT…IAED), 283-320 (KELA…KHPS), 322-355 (VTAC…GSES), and 356-392 (SIDR…KYPR). Position 594 is a phosphothreonine (T594). The interaction with ZNF289/ARFGAP2 stretch occupies residues 609–874 (RQEIFQEQLA…PVDIILASVG (266 aa)).

It belongs to the COPG family. In terms of assembly, oligomeric complex that consists of at least the alpha, beta, beta', gamma, delta, epsilon and zeta subunits. Interacts with ZNF289/ARFGAP2 through its C-terminal appendage domain. Interacts with EGFR upon EGF treatment; interaction is essential for regulation of EGF-dependent nuclear transport of EGFR by retrograde trafficking from the Golgi to the ER. The coatomer interacts with KDEL receptors; the interaction is important for retrograde trafficking of KDEL-bearing proteins from the Golgi to the endoplasmic reticulum. Interacts with COPB1. Interacts with TMED10 (via C-terminus). Interacts with TMED2, TMED3, TMED7 and TMED9.

The protein localises to the cytoplasm. Its subcellular location is the cytosol. It localises to the golgi apparatus membrane. The protein resides in the cytoplasmic vesicle. It is found in the COPI-coated vesicle membrane. Functionally, the coatomer is a cytosolic protein complex that binds to dilysine motifs and reversibly associates with Golgi non-clathrin-coated vesicles, which further mediate biosynthetic protein transport from the ER, via the Golgi up to the trans Golgi network. Coatomer complex is required for budding from Golgi membranes, and is essential for the retrograde Golgi-to-ER transport of dilysine-tagged proteins. In mammals, the coatomer can only be recruited by membranes associated to ADP-ribosylation factors (ARFs), which are small GTP-binding proteins; the complex also influences the Golgi structural integrity, as well as the processing, activity, and endocytic recycling of LDL receptors. Required for limiting lipid storage in lipid droplets. Involved in lipid homeostasis by regulating the presence of perilipin family members PLIN2 and PLIN3 at the lipid droplet surface and promoting the association of adipocyte triglyceride lipase (PNPLA2) with the lipid droplet surface to mediate lipolysis. The chain is Coatomer subunit gamma-1 (Copg1) from Rattus norvegicus (Rat).